Here is a 255-residue protein sequence, read N- to C-terminus: Small ribosomal subunit protein uS2 (255 aa).

Belongs to the universal ribosomal protein uS2 family.

The sequence is that of Small ribosomal subunit protein uS2 from Streptococcus thermophilus (strain CNRZ 1066).